The primary structure comprises 968 residues: Alanine--tRNA ligase, cytoplasmic (968 aa).

M1 carries the N-acetylmethionine modification. ATP is bound by residues R77, H95, W176, and 214–216 (IWN). L-alanine contacts are provided by N216 and D239. G243 is an ATP binding site. Phosphoserine occurs at positions 399 and 555. H605, H609, C723, and H727 together coordinate Zn(2+). The short motif at 750–763 (RRIVAVTGAEAQKA) is the Nuclear localization signal element. K876 carries the N6-acetyllysine modification. K943 bears the N6,N6,N6-trimethyllysine; alternate mark. Position 943 is an N6,N6-dimethyllysine; alternate (K943). The residue at position 943 (K943) is an N6-methyllysine; alternate.

It belongs to the class-II aminoacyl-tRNA synthetase family. As to quaternary structure, monomer. Interacts with ANKRD16; the interaction is direct. Zn(2+) serves as cofactor. Post-translationally, ISGylated. In terms of processing, methylation at 'Lys-943' by METTL21C.

It is found in the cytoplasm. It localises to the nucleus. The enzyme catalyses tRNA(Ala) + L-alanine + ATP = L-alanyl-tRNA(Ala) + AMP + diphosphate. It carries out the reaction (S)-lactate + ATP + H(+) = (S)-lactoyl-AMP + diphosphate. It catalyses the reaction (S)-lactoyl-AMP + L-lysyl-[protein] = N(6)-[(S)-lactoyl]-L-lysyl-[protein] + AMP + 2 H(+). Its activity is regulated as follows. The protein lactyltransferase activity is inhibited by beta-alanine. Catalyzes the attachment of alanine to tRNA(Ala) in a two-step reaction: alanine is first activated by ATP to form Ala-AMP and then transferred to the acceptor end of tRNA(Ala). Also edits incorrectly charged tRNA(Ala) via its editing domain. In presence of high levels of lactate, also acts as a protein lactyltransferase that mediates lactylation of lysine residues in target proteins, such as TEAD1, TP53/p53 and YAP1. Protein lactylation takes place in a two-step reaction: lactate is first activated by ATP to form lactate-AMP and then transferred to lysine residues of target proteins. Acts as an inhibitor of TP53/p53 activity by catalyzing lactylation of TP53/p53. Acts as a positive regulator of the Hippo pathway by mediating lactylation of TEAD1 and YAP1. This chain is Alanine--tRNA ligase, cytoplasmic, found in Mus musculus (Mouse).